Reading from the N-terminus, the 338-residue chain is Glyceraldehyde-3-phosphate dehydrogenase (338 aa).

Residues 12-13 (RI), Asp-38, and Ser-125 contribute to the NAD(+) site. Residues 155-157 (SCT), Thr-186, 216-217 (TG), and Arg-239 contribute to the D-glyceraldehyde 3-phosphate site. The active-site Nucleophile is Cys-156. Asn-320 is an NAD(+) binding site.

This sequence belongs to the glyceraldehyde-3-phosphate dehydrogenase family. As to quaternary structure, homotetramer.

The protein resides in the cytoplasm. The catalysed reaction is D-glyceraldehyde 3-phosphate + phosphate + NAD(+) = (2R)-3-phospho-glyceroyl phosphate + NADH + H(+). The protein operates within carbohydrate degradation; glycolysis; pyruvate from D-glyceraldehyde 3-phosphate: step 1/5. Catalyzes the oxidative phosphorylation of glyceraldehyde 3-phosphate (G3P) to 1,3-bisphosphoglycerate (BPG) using the cofactor NAD. The first reaction step involves the formation of a hemiacetal intermediate between G3P and a cysteine residue, and this hemiacetal intermediate is then oxidized to a thioester, with concomitant reduction of NAD to NADH. The reduced NADH is then exchanged with the second NAD, and the thioester is attacked by a nucleophilic inorganic phosphate to produce BPG. The polypeptide is Glyceraldehyde-3-phosphate dehydrogenase (gap) (Lactobacillus delbrueckii subsp. bulgaricus).